Here is a 555-residue protein sequence, read N- to C-terminus: MFS-type transporter VdtG (555 aa).

Residues 1–20 (MNGNGTADKPGPPGGKPFGP) form a disordered region. An N-linked (GlcNAc...) asparagine glycan is attached at N4. The next 3 membrane-spanning stretches (helical) occupy residues 30–50 (TGFKLYSIMTGLYLASFLTAL), 71–91 (DIGWYGSAYLLTFCAFQLLFG), and 101–121 (WVFLSAVLIFEIGSAICGAAP). N-linked (GlcNAc...) asparagine glycosylation occurs at N122. A run of 2 helical transmembrane segments spans residues 132 to 152 (IAGLGSSGIFGGSVIITFFTV) and 162 to 182 (GIAGVIFALASSVGPLIGGGF). N-linked (GlcNAc...) asparagine glycosylation occurs at N185. 4 helical membrane passes run 190–210 (WCFYINLPVGALTVVTILLFL), 232–252 (LGNLCLIPGIICLLLAIQWGG), 262–282 (IVALLVLAGVLLIAFVGVQLW), and 304–324 (AFTICVTAGFMSFNYYLPIWF). An N-linked (GlcNAc...) asparagine glycan is attached at N329. Helical transmembrane passes span 337-357 (VMMLPTVISSGVASLACGFII), 364-384 (TPFMIGGSVLMAIGAGLLTTF), 393-413 (WIGYQVLWALGCGMSMQQASL), 425-445 (PIGISLIFFSQSLGGSVFLAV), and 497-517 (LMDVFRVAVASSCACVVAAAF). A disordered region spans residues 528-555 (AAGPGGPGGPGGPGGPGGPEGLRGGNKV). Residues 530-555 (GPGGPGGPGGPGGPGGPEGLRGGNKV) are compositionally biased toward gly residues.

The protein belongs to the major facilitator superfamily. TCR/Tet family.

The protein localises to the endoplasmic reticulum membrane. Its function is as follows. MFS-type transporter; part of the gene cluster that mediates the biosynthesis of viriditoxin, one of the 'classical' secondary metabolites produced by fungi and that has antibacterial activity. Is not essential for viriditoxin production. This chain is MFS-type transporter VdtG, found in Byssochlamys spectabilis (Paecilomyces variotii).